The sequence spans 531 residues: MASTELSLKRTLTDILEDELYHTNPGHSQFTSHYQNYHPNASITPYKLVNKNKENNTFTWNHSLQHQNESSAASIPPQQTYHFPIFNKYADPTLTTTTSFTTSEATANDRQINNVHLIPNEIKGASETPLQKTVNLKNIMKVSDPYVPTRNTFNYDVKISNDFFDNGDNLYGNDEEVLFYEDNYNPKMQWSLQDNSAAINNEDARAIFNNEFDSDDDDISDDEEDEIEENCLQQEQHQEEPLLSLDVTPISMFGSDQKTGRAKSSSHLFNEYSYVDSNMDSISSVVSEDLLDERGHEKIEDEDEDNDLDEDDIYDISLLKNRRKQSFVLNKNTIDFERFPSPSTSANVPSTATTGKRKPAKSSSNRSCVSNSNENGTLERIKKPTSAVVSSNASRRKLINYTKKHLSSHSSTNSNSKPSTASPSAHTSSSDGNNEIFTCQIMNLITNEPCGAQFSRSYDLTRHQNTIHAKRKIVFRCSECIKILGSEGYQKTFSRLDALTRHIKSKHEDLSLEQRQEVTKFAKANIGYVMG.

The tract at residues 338–432 (RFPSPSTSAN…PSAHTSSSDG (95 aa)) is disordered. The span at 341–354 (SPSTSANVPSTATT) shows a compositional bias: polar residues. A compositionally biased stretch (low complexity) spans 362 to 375 (SSSNRSCVSNSNEN). A Nuclear localization signal motif is present at residues 382 to 398 (KKPTSAVVSSNASRRKL). A compositionally biased stretch (basic residues) spans 394–407 (SRRKLINYTKKHLS). The span at 408–430 (SHSSTNSNSKPSTASPSAHTSSS) shows a compositional bias: low complexity.

In terms of assembly, probably interacts with SEC63. Interacts with MUB1, UBR2 and RPN2. Ubiquitinated by UBR2 in the presence of UBC2; which leads to proteasomal degradation.

It is found in the nucleus. Its function is as follows. Acts as a transcriptional activator of a number of genes encoding proteasomal subunits. Binds to a PACE (proteasome-associated control element) DNA sequence 5'-GGTGGCAAA-3'. Its expression is in turn regulated by the 26S proteasome, thereby providing a negative feedback control mechanism. Required for normal growth at low temperatures. This is Protein RPN4 (RPN4) from Saccharomyces cerevisiae (strain ATCC 204508 / S288c) (Baker's yeast).